Consider the following 394-residue polypeptide: Cell division protein FtsZ (394 aa).

Residues 21 to 25 (GGGGN), 108 to 110 (GTG), Glu139, Arg143, and Asp187 each bind GTP.

The protein belongs to the FtsZ family. As to quaternary structure, homodimer. Polymerizes to form a dynamic ring structure in a strictly GTP-dependent manner. Interacts directly with several other division proteins.

Its subcellular location is the cytoplasm. In terms of biological role, essential cell division protein that forms a contractile ring structure (Z ring) at the future cell division site. The regulation of the ring assembly controls the timing and the location of cell division. One of the functions of the FtsZ ring is to recruit other cell division proteins to the septum to produce a new cell wall between the dividing cells. Binds GTP and shows GTPase activity. This chain is Cell division protein FtsZ, found in Azotobacter vinelandii.